An 810-amino-acid chain; its full sequence is Transitional endoplasmic reticulum ATPase homolog 2 (810 aa).

ATP is bound by residues 252-258 (PGTGKTL), asparagine 353, histidine 389, and 526-531 (GCGKTL). Positions 713 to 727 (RQEKERQDRSARGEE) are enriched in basic and acidic residues. Disordered stretches follow at residues 713 to 732 (RQEKERQDRSARGEELMEDE) and 777 to 810 (FGNNFKFPGEAPSAGQPVGGNGGSGGNDDDDLYN). A compositionally biased stretch (gly residues) spans 793 to 802 (PVGGNGGSGG). Residues 805–810 (DDDLYN) are interaction with ufd-2.

It belongs to the AAA ATPase family. CDC48 subfamily. As to quaternary structure, homohexamer; oligomerization is ATP-independent. Forms a ring-shaped particle of 18.3 nm diameter, that displays 6-fold radial symmetry. Interacts with cdc-48.1 and thus may form heterohexamers. Forms a complex composed of ubxn-3, cdc-48.1 and/or cdc-48.2 and substrate cdt-1. Interacts (via N-terminus) with ubxn-3. Interacts (via N-terminus) with atx-3 (via RRDR motif). Interacts (via N-terminus) with ubxn-5. Interacts with ufd-1. Interacts (via DDDLYN motif) with ufd-2. Interacts (via N-terminus) with ubxn-1. Interacts (via N-terminus) with ubxn-2. Interacts (via N-terminus) with ubxn-4. Interacts with ubxn-6. In terms of tissue distribution, expressed in body wall muscles.

It is found in the cytoplasm. The enzyme catalyses ATP + H2O = ADP + phosphate + H(+). Its activity is regulated as follows. The first ATP-binding region has low ATPase activity. The second ATP-binding region is responsible for ATPase activity. ATP binding to the first ATP-binding region induces intrinsic activity of the second ATP-binding region. While ATP binding to the first ATP-binding region appears to prevent ATP hydrolysis by the second ATP-binding region, ADP-binding to first region promotes the coordinate and cooperative ATPase cycle of the second ATP-binding region. ATP binding to the first ATP-binding region induces a conformational change, promoting the rotation of the first ATP-binding region relative to the second ATP-binding region in the hexamer. Inhibited by N-ethylmaleimide (NEM). Functionally, ATP-dependent chaperone which probably uses the energy provided by ATP hydrolysis to generate mechanical force to unfold substrate proteins, disassemble protein complexes, and disaggregate protein aggregates. However, able to prevent aggregation of unfolded proteins also in an ATP-independent manner. Targets polyubiquitinated proteins for proteasomal degradation by binding to 'Lys-48'-linked polyubiquitin chains. Involved in the cytoplasmic elimination of misfolded proteins exported from the ER. This pathway, known as ERAD, prevents the activation of the unfolded protein response (UPR) caused by the accumulation of misfolded proteins in the ER. Together with udf-2 and chn-1, regulates myosin assembly in body wall muscles by targeting myosin chaperone unc-45 for proteasomal degradation. During oocyte meiosis and together with cdc-48.1, required for chromosome condensation at the diakinesis phase in prophase I and for progression of metaphase I. During the first embryonic cell division, regulates DNA replication and thus chromosome segregation and decondensation, and nuclear envelope re-assembly. In S phase and in association with ufd-1, npl-4.1 and/or npl-4.2 and ubxn-3, ensures the degradation of DNA licensing factor cdt-1 after the initiation of DNA replication and thus the disassembly of the DNA replication CMG helicase complex by promoting the dissociation from chromatin of several of its components including cdc-45 and sld-5. Regulates ubxn-3 nuclear localization during S phase. During the first embryonic cell divisions and together with cdc-48.1, regulates the re-assembly of the nuclear envelope after mitosis possibly by inactivating kinase air-2, a component of the chromosomal passenger complex (CPC). The protein is Transitional endoplasmic reticulum ATPase homolog 2 (cdc-48.2) of Caenorhabditis elegans.